The following is a 560-amino-acid chain: DNA ligase B (560 aa).

The N6-AMP-lysine intermediate role is filled by Lys-124.

This sequence belongs to the NAD-dependent DNA ligase family. LigB subfamily.

The enzyme catalyses NAD(+) + (deoxyribonucleotide)n-3'-hydroxyl + 5'-phospho-(deoxyribonucleotide)m = (deoxyribonucleotide)n+m + AMP + beta-nicotinamide D-nucleotide.. Catalyzes the formation of phosphodiester linkages between 5'-phosphoryl and 3'-hydroxyl groups in double-stranded DNA using NAD as a coenzyme and as the energy source for the reaction. This Escherichia coli O139:H28 (strain E24377A / ETEC) protein is DNA ligase B.